A 267-amino-acid polypeptide reads, in one-letter code: Transcription factor HES-1 (267 aa).

Positions 1-45 (MPADLMEKNSSSPVAATPASMSNTPDKPKTASEHRKSSKPIMEKR) are disordered. Polar residues predominate over residues 8-25 (KNSSSPVAATPASMSNTP). Over residues 26-35 (DKPKTASEHR) the composition is skewed to basic and acidic residues. The bHLH domain maps to 34 to 91 (HRKSSKPIMEKRRRARINESLGQLKTLILDALKKDSSRHSKLEKADILEMTVKHLRNL). The Orange domain maps to 110–143 (YRAGFSECMNEVTRFLSTCEGVNTDVRTRLLGHL). Positions 264–267 (WRPW) match the WRPW motif motif.

In terms of assembly, transcription repression requires formation of a complex with a corepressor protein of the Groucho/TLE family. Interacts with the bHLH protein hes2, and binds DNA in the form of a heterodimer with the bHLH protein hey1/hrt1. Interacts with the bHLH protein hes6; this interaction may inhibit the transcriptional repressor activity.

Its subcellular location is the nucleus. In terms of biological role, transcriptional repressor of a subset of early mesodermal genes including myod1 and t/bra. Binds DNA on N-box motifs: 5'-CACNAG-3'. Acts as a negative regulator of myogenesis, mediating Notch signaling to repress expression of myod1. This Xenopus tropicalis (Western clawed frog) protein is Transcription factor HES-1.